We begin with the raw amino-acid sequence, 492 residues long: Aerolysin (492 aa).

The N-terminal stretch at 1–21 is a signal peptide; sequence MKALKITGLSLIISATLAAQT. Intrachain disulfides connect C42–C98 and C182–C187. The segment at 68 to 84 is interaction with host N-linked glycan; it reads WQISGLANNWVILGPGY. A part of the transmembrane beta-barrel after proteolytic activation of the toxin and insertion into the host membrane region spans residues 256–288; that stretch reads YGLSEKVSTKNKFKWPLVGETEVSIEIAANQSW. Positions 346–355 are interaction with glycans from host GPI-anchor; that stretch reads RWGGNAWHTH. Residues 446–492 constitute a propeptide that is removed on maturation; sequence GSDSKVRRTRSVDGANTGLKLDIPLDAQELAELGFENVTLSVTPARN.

It belongs to the aerolysin family. In terms of assembly, homodimer in solution; homoheptamer in the host membrane. After binding to GPI-anchored proteins in target membranes and proteolytic removal of the C-terminal propeptide, the protein assembles into a heptameric pre-pore complex. A further conformation change leads to insertion into the host membrane. In terms of processing, proteolytic cleavage and subsequent release of the propeptide trigger a major conformation change, leading to the formation of a heptameric pre-pore that then inserts into the host membrane.

It is found in the secreted. Its subcellular location is the host cell membrane. Its function is as follows. Secreted, cytolytic toxin that forms pores in host membranes after proteolytic removal of a C-terminal propeptide, leading to destruction of the membrane permeability barrier and cell death. The pores are formed by transmembrane beta-strands and are approximately 3 nm in diameter. This is Aerolysin (aerA) from Aeromonas enteropelogenes (Aeromonas trota).